The chain runs to 649 residues: MNIPIYQVPSVTMQSLHQQSLYQQTYLDRNRMVTDVFVQEHVSQSSWSMAGSSAVFIPGPIITGSAHGHCHHTATVSTVSPQLATFMPFPGMQYYAASSATMNAYGHNQMYSTRASASVGFYLPQYHASCSHEQPKKTFCAAQTQTQQTAKTSCDVGTQVDLDAEELRSEARKPRPESVVPEESSISSLESGAGDGFRVQKKLRNSEVKLLDQRLHDITRVSLHGSEIAERLANAHRNRPCFKKIDTLCARLKQDLLRPDGVLPNINSQGIAWAVKDFIFVFTRIVNAWVILKGYVYNTPDALNKIKDELPSGFMASFDSWQISTLSIVKMIVKSFVNLDELLQKQKNSFSGKDGAPINQSNSISLRSFIDSNDSSGLAQKYLGMTTGHGPSAFSTPNNQIRNNAASKGQEPTSSALYKPKCALNLNYLYTMIEDSEETQRHVDANGTYLKTGTYQPLQKESMQLEMPPAKPNDHYVERNANQQALPSQEIPNAPTPKSSPQSDRPRDVRSYTNPFSAIGKEVTRQLYEFSDRVMELKNLERFFKKQFTRNYYPNFYQHCQDDFIDVRAIILRCENSSYHHIYQAIHDLRRIIFTVRCYLQMYTDENLLYYIDLYERSVNDMLSKPPHYPNQFDHIMGRPGEKLFNYEI.

Positions 167-176 (LRSEARKPRP) are enriched in basic and acidic residues. 3 disordered regions span residues 167 to 193 (LRSE…ESGA), 389 to 414 (HGPS…EPTS), and 485 to 512 (ALPS…VRSY). A compositionally biased stretch (low complexity) spans 177–191 (ESVVPEESSISSLES). Polar residues-rich tracts occupy residues 393 to 414 (AFST…EPTS) and 485 to 503 (ALPS…SPQS).

In terms of biological role, required for male meiotic cytokinesis through its involvement in the regulation of mitochondrial aggregation and fusion, astral spindle assembly and contractile ring formation. This is Protein mitoshell from Drosophila melanogaster (Fruit fly).